We begin with the raw amino-acid sequence, 699 residues long: Osmotic avoidance abnormal protein 3 (699 aa).

Residues 4 to 327 (SVRVAVRCRP…LRYANRAKNI (324 aa)) form the Kinesin motor domain. 87 to 94 (GQTGSGKT) lines the ATP pocket. The stretch at 339–523 (DALLREYQEE…EIEDLHGEFE (185 aa)) forms a coiled coil.

It belongs to the TRAFAC class myosin-kinesin ATPase superfamily. Kinesin family. Kinesin II subfamily. As to expression, expressed in an exclusive set of 26 chemosensory neurons whose dendritic endings are exposed to the external environment; six IL2 neurons of the inner labial sensilla, 8 pairs of amphid neurons in the head, and 2 pairs of phasmid neurons in the tail.

It is found in the cytoplasm. The protein localises to the cytoskeleton. The protein resides in the cell projection. It localises to the cilium. Its subcellular location is the cilium axoneme. It is found in the cilium basal body. In terms of biological role, kinesin motor protein which is required for the anterograde intraflagellar transport (IFT) along the middle segment of the sensory neuron cilia together with the kinesin II motor complex (composed of klp-11, klp-20 and kap-1) and on its own, is required for IFT along the distal segment. In addition, regulates the length of cilia. May have a role during neurogenesis and axonal transport. This is Osmotic avoidance abnormal protein 3 from Caenorhabditis elegans.